We begin with the raw amino-acid sequence, 160 residues long: Cytochrome b6-f complex subunit 4 (160 aa).

3 helical membrane-spanning segments follow: residues 36–56 (LLYI…GLAV), 95–115 (LLGV…PFLE), and 131–151 (TVFL…TLPI).

This sequence belongs to the cytochrome b family. PetD subfamily. In terms of assembly, the 4 large subunits of the cytochrome b6-f complex are cytochrome b6, subunit IV (17 kDa polypeptide, petD), cytochrome f and the Rieske protein, while the 4 small subunits are petG, petL, petM and petN. The complex functions as a dimer.

Its subcellular location is the plastid. It is found in the chloroplast thylakoid membrane. Its function is as follows. Component of the cytochrome b6-f complex, which mediates electron transfer between photosystem II (PSII) and photosystem I (PSI), cyclic electron flow around PSI, and state transitions. The polypeptide is Cytochrome b6-f complex subunit 4 (Morus indica (Mulberry)).